An 86-amino-acid polypeptide reads, in one-letter code: Translation initiation factor IF-1 2 (86 aa).

Residues 1 to 72 form the S1-like domain; it reads MAKEELLEME…SKGRITFRHI (72 aa).

It belongs to the IF-1 family. As to quaternary structure, component of the 30S ribosomal translation pre-initiation complex which assembles on the 30S ribosome in the order IF-2 and IF-3, IF-1 and N-formylmethionyl-tRNA(fMet); mRNA recruitment can occur at any time during PIC assembly.

It localises to the cytoplasm. Its function is as follows. One of the essential components for the initiation of protein synthesis. Stabilizes the binding of IF-2 and IF-3 on the 30S subunit to which N-formylmethionyl-tRNA(fMet) subsequently binds. Helps modulate mRNA selection, yielding the 30S pre-initiation complex (PIC). Upon addition of the 50S ribosomal subunit IF-1, IF-2 and IF-3 are released leaving the mature 70S translation initiation complex. The polypeptide is Translation initiation factor IF-1 2 (Polynucleobacter asymbioticus (strain DSM 18221 / CIP 109841 / QLW-P1DMWA-1) (Polynucleobacter necessarius subsp. asymbioticus)).